The following is a 92-amino-acid chain: Small ribosomal subunit protein uS19 (92 aa).

This sequence belongs to the universal ribosomal protein uS19 family.

Functionally, protein S19 forms a complex with S13 that binds strongly to the 16S ribosomal RNA. This Prochlorococcus marinus (strain MIT 9312) protein is Small ribosomal subunit protein uS19.